Consider the following 784-residue polypeptide: Ubiquitin carboxyl-terminal hydrolase 1 (784 aa).

Disordered stretches follow at residues 1 to 21 (MPGV…SKKN) and 33 to 54 (TKRA…EYRG). Over residues 7-16 (SESNGLSRGS) the composition is skewed to polar residues. Phosphoserine is present on residues S16, S42, and S67. Residues 81-784 (VGLNNLGNTC…TPYLLFYKKL (704 aa)) form the USP domain. The active-site Nucleophile is C90. Basic and acidic residues-rich tracts occupy residues 232-243 (KVEEKSLQKEET) and 252-264 (DSTR…KEQL). Disordered regions lie at residues 232 to 341 (KVEE…KINW) and 363 to 411 (TNQR…SSEA). The segment covering 389–407 (NTVNGSGPASPGSSVTPVD) has biased composition (polar residues). The residue at position 475 (S475) is a Phosphoserine. H593 (proton acceptor) is an active-site residue. The tract at residues 686–723 (PEKVVGTPFTDSRNSETNDTNGTQESDRSKESSDQTGI) is disordered. Positions 694-709 (FTDSRNSETNDTNGTQ) are enriched in polar residues. S767 carries the phosphoserine modification.

The protein belongs to the peptidase C19 family. In terms of assembly, interacts with FANCD2 and PCNA. Interacts with WDR48. Interacts with ATAD5; the interaction regulates USP1-mediated PCNA deubiquitination. Post-translationally, autocatalytic cleavage of USP1 following UV irradiation inactivates it, leading to an increase in ubiquitinated PCNA, recruitment of POLH and translesion synthesis. In terms of processing, ubiquitinated by the CRL2(KLHDC2) complex following autocatalytic cleavage, leading to its degradation: the CRL2(KLHDC2) complex recognizes the diglycine (Gly-Gly) at the C-terminus.

It is found in the nucleus. It catalyses the reaction Thiol-dependent hydrolysis of ester, thioester, amide, peptide and isopeptide bonds formed by the C-terminal Gly of ubiquitin (a 76-residue protein attached to proteins as an intracellular targeting signal).. Negative regulator of DNA damage repair which specifically deubiquitinates monoubiquitinated FANCD2. Also involved in PCNA-mediated translesion synthesis (TLS) by deubiquitinating monoubiquitinated PCNA. Has almost no deubiquitinating activity by itself and requires the interaction with WDR48 to have a high activity. The sequence is that of Ubiquitin carboxyl-terminal hydrolase 1 from Rattus norvegicus (Rat).